Here is a 342-residue protein sequence, read N- to C-terminus: uncharacterized protein (342 aa).

It belongs to the cycloisomerase 2 family.

This is an uncharacterized protein from Staphylococcus aureus (strain N315).